We begin with the raw amino-acid sequence, 201 residues long: Holliday junction resolvase RecU (201 aa).

Thr-85, Asp-87, Asp-100, and Gln-119 together coordinate Mg(2+).

It belongs to the RecU family. Mg(2+) is required as a cofactor.

The protein localises to the cytoplasm. The enzyme catalyses Endonucleolytic cleavage at a junction such as a reciprocal single-stranded crossover between two homologous DNA duplexes (Holliday junction).. Functionally, endonuclease that resolves Holliday junction intermediates in genetic recombination. Cleaves mobile four-strand junctions by introducing symmetrical nicks in paired strands. Promotes annealing of linear ssDNA with homologous dsDNA. Required for DNA repair, homologous recombination and chromosome segregation. The polypeptide is Holliday junction resolvase RecU (Pediococcus pentosaceus (strain ATCC 25745 / CCUG 21536 / LMG 10740 / 183-1w)).